The following is a 273-amino-acid chain: tRNA pseudouridine synthase B (273 aa).

Asp-38 (nucleophile) is an active-site residue.

The protein belongs to the pseudouridine synthase TruB family. Type 1 subfamily.

It catalyses the reaction uridine(55) in tRNA = pseudouridine(55) in tRNA. Its function is as follows. Responsible for synthesis of pseudouridine from uracil-55 in the psi GC loop of transfer RNAs. The sequence is that of tRNA pseudouridine synthase B from Campylobacter curvus (strain 525.92).